Consider the following 1284-residue polypeptide: ABC multidrug transporter atrC (1284 aa).

A compositionally biased stretch (basic and acidic residues) spans 1 to 11 (MKSTAESKETP). The tract at residues 1–24 (MKSTAESKETPSQDESTTSVPCTE) is disordered. Helical transmembrane passes span 55-75 (AVAI…NLIF), 99-119 (AAEL…LSYT), 178-198 (IGLL…RLWC), 203-223 (TLIC…VAAV), 282-302 (LLGL…GLAF), and 320-340 (IFTV…LAPY). One can recognise an ABC transmembrane type-1 1 domain in the interval 55–346 (AVAILAACAS…LAPYSIEFSR (292 aa)). Residues 381–626 (VELENVTFSY…DGVYAGLVKI (246 aa)) form the ABC transporter 1 domain. 2 N-linked (GlcNAc...) asparagine glycosylation sites follow: N385 and N401. 416–423 (GQSGSGKS) serves as a coordination point for ATP. N488 and N632 each carry an N-linked (GlcNAc...) asparagine glycan. Transmembrane regions (helical) follow at residues 705–725 (LVVL…AILM) and 745–765 (FYAS…LAVG). One can recognise an ABC transmembrane type-1 2 domain in the interval 705 to 992 (LVVLLGCLGG…LFQWSTSITK (288 aa)). Residue N800 is glycosylated (N-linked (GlcNAc...) asparagine). 4 consecutive transmembrane segments (helical) span residues 824–844 (IALV…AIAF), 846–866 (WKLG…AGMV), 931–951 (MICF…GFWY), and 955–975 (LVSL…SVFF). N995 carries N-linked (GlcNAc...) asparagine glycosylation. Positions 1027–1280 (IAMDNVRFSY…GGLYRRMCEA (254 aa)) constitute an ABC transporter 2 domain. 1062-1069 (GSSGCGKS) is an ATP binding site. N-linked (GlcNAc...) asparagine glycosylation is present at N1122.

Belongs to the ABC transporter superfamily. ABCB family. Multidrug resistance exporter (TC 3.A.1.201) subfamily.

It localises to the cell membrane. Pleiotropic ABC efflux transporter involved in the protection of the cells against a wide range of toxic compounds. The chain is ABC multidrug transporter atrC from Emericella nidulans (Aspergillus nidulans).